We begin with the raw amino-acid sequence, 170 residues long: Large ribosomal subunit protein uL16 (170 aa).

This sequence belongs to the universal ribosomal protein uL16 family.

The protein is Large ribosomal subunit protein uL16 of Methanospirillum hungatei JF-1 (strain ATCC 27890 / DSM 864 / NBRC 100397 / JF-1).